Reading from the N-terminus, the 185-residue chain is Ribosome-recycling factor (185 aa).

Residues 138-160 are disordered; the sequence is AMDKAVKDGEVGEDEGARGEKEL.

This sequence belongs to the RRF family.

Its subcellular location is the cytoplasm. Responsible for the release of ribosomes from messenger RNA at the termination of protein biosynthesis. May increase the efficiency of translation by recycling ribosomes from one round of translation to another. This Micrococcus luteus (strain ATCC 4698 / DSM 20030 / JCM 1464 / CCM 169 / CCUG 5858 / IAM 1056 / NBRC 3333 / NCIMB 9278 / NCTC 2665 / VKM Ac-2230) (Micrococcus lysodeikticus) protein is Ribosome-recycling factor.